Here is a 339-residue protein sequence, read N- to C-terminus: Phosphate acyltransferase (339 aa).

Belongs to the PlsX family. Homodimer. Probably interacts with PlsY.

Its subcellular location is the cytoplasm. The catalysed reaction is a fatty acyl-[ACP] + phosphate = an acyl phosphate + holo-[ACP]. It functions in the pathway lipid metabolism; phospholipid metabolism. Functionally, catalyzes the reversible formation of acyl-phosphate (acyl-PO(4)) from acyl-[acyl-carrier-protein] (acyl-ACP). This enzyme utilizes acyl-ACP as fatty acyl donor, but not acyl-CoA. This is Phosphate acyltransferase from Methylococcus capsulatus (strain ATCC 33009 / NCIMB 11132 / Bath).